A 347-amino-acid chain; its full sequence is S-adenosylmethionine:tRNA ribosyltransferase-isomerase (347 aa).

This sequence belongs to the QueA family. Monomer.

The protein localises to the cytoplasm. The enzyme catalyses 7-aminomethyl-7-carbaguanosine(34) in tRNA + S-adenosyl-L-methionine = epoxyqueuosine(34) in tRNA + adenine + L-methionine + 2 H(+). Its pathway is tRNA modification; tRNA-queuosine biosynthesis. Its function is as follows. Transfers and isomerizes the ribose moiety from AdoMet to the 7-aminomethyl group of 7-deazaguanine (preQ1-tRNA) to give epoxyqueuosine (oQ-tRNA). This Xylella fastidiosa (strain M12) protein is S-adenosylmethionine:tRNA ribosyltransferase-isomerase.